We begin with the raw amino-acid sequence, 308 residues long: Urease accessory protein UreD (308 aa).

Belongs to the UreD family. In terms of assembly, ureD, UreF and UreG form a complex that acts as a GTP-hydrolysis-dependent molecular chaperone, activating the urease apoprotein by helping to assemble the nickel containing metallocenter of UreC. The UreE protein probably delivers the nickel.

Its subcellular location is the cytoplasm. Its function is as follows. Required for maturation of urease via the functional incorporation of the urease nickel metallocenter. This Psychromonas ingrahamii (strain DSM 17664 / CCUG 51855 / 37) protein is Urease accessory protein UreD.